Here is a 255-residue protein sequence, read N- to C-terminus: Ly6/PLAUR domain-containing protein 8 (255 aa).

Positions 1 to 20 (MRGVFIAGVIAAFAITVVDS) are cleaved as a signal peptide. Residues asparagine 22, asparagine 30, asparagine 53, asparagine 72, asparagine 76, asparagine 105, asparagine 115, asparagine 128, asparagine 154, asparagine 169, asparagine 179, asparagine 200, and asparagine 210 are each glycosylated (N-linked (GlcNAc...) asparagine). The UPAR/Ly6 domain occupies 121–170 (CMSCYGHNKTLCEEKPQKCYEGEQCVFIIAEMVNGSGRVELKGCSDISNS). Serine 233 carries GPI-anchor amidated serine lipidation. The propeptide at 234–255 (MGTKASFTSSIFGSLLLLKLLF) is removed in mature form.

This sequence belongs to the CNF-like-inhibitor family. Post-translationally, highly N-glycosylated. Not O-glycosylated. In terms of processing, GPI-anchored. The GPI-anchor is cleaved, leading to secretion into the colonic lumen. In terms of tissue distribution, specifically present in enterocytes located at the uppermost epithelial layer of the colon (at protein level). Exclusively expressed in the large intestine: specifically expressed on the apical surface of epithelial cells located at the uppermost layer of the colonic gland.

It is found in the cell membrane. The protein resides in the secreted. In terms of biological role, secreted protein specifically required to prevent invasion of Gram-negative bacteria in the inner mucus layer of the colon epithelium, a portion of the large intestine which is free of commensal microbiota. Prevents invasion of flagellated microbiota by binding to the flagellum of bacteria, such as P.mirabilis, thereby inhibiting bacterial motility in the intestinal lumen. Segregation of intestinal bacteria and epithelial cells in the colon is required to preserve intestinal homeostasis. This Mus musculus (Mouse) protein is Ly6/PLAUR domain-containing protein 8.